Consider the following 302-residue polypeptide: Stanniocalcin-2 (302 aa).

An N-terminal signal peptide occupies residues 1 to 24 (MCAERLGQFMTLALVLATFDPARG). The disordered stretch occupies residues 23–44 (RGTDATNPPEGPQDRSPQQKGR). N-linked (GlcNAc...) asparagine glycosylation is found at N73 and N74. The disordered stretch occupies residues 217–302 (RPPTAPPERQ…EQSEYSDIRR (86 aa)). Basic and acidic residues predominate over residues 227–264 (PQVDRTKLSRAHHGEAGHHLPEPSSRETGRGAKGERGS). Phosphoserine is present on residues S250 and S251. T254 is modified (phosphothreonine).

Belongs to the stanniocalcin family. Homodimer; disulfide-linked.

It is found in the secreted. Functionally, has an anti-hypocalcemic action on calcium and phosphate homeostasis. This chain is Stanniocalcin-2 (STC2), found in Pongo abelii (Sumatran orangutan).